Reading from the N-terminus, the 551-residue chain is Eukaryotic translation initiation factor 3 subunit D-2 (551 aa).

The interval 108 to 152 (RTRGRTGRGTPNIASLGGSTAGGATASSTKYGKGRHTRNTQNVGR) is disordered. Residues 115–136 (RGTPNIASLGGSTAGGATASST) are compositionally biased toward low complexity. The tract at residues 290–304 (QFDLLTVNETSVEPP) is RNA gate. Residues 527–551 (PENAFDSDRDEEEESSEPLSNSNDN) form a disordered region.

This sequence belongs to the eIF-3 subunit D family. In terms of assembly, component of the eukaryotic translation initiation factor 3 (eIF-3) complex. The eIF-3 complex interacts with pix.

The protein localises to the cytoplasm. In terms of biological role, mRNA cap-binding component of the eukaryotic translation initiation factor 3 (eIF-3) complex, which is involved in protein synthesis of a specialized repertoire of mRNAs and, together with other initiation factors, stimulates binding of mRNA and methionyl-tRNAi to the 40S ribosome. The eIF-3 complex specifically targets and initiates translation of a subset of mRNAs involved in cell proliferation. In the eIF-3 complex, eif3d specifically recognizes and binds the 7-methylguanosine cap of a subset of mRNAs. This is Eukaryotic translation initiation factor 3 subunit D-2 from Drosophila simulans (Fruit fly).